Consider the following 191-residue polypeptide: Small ribosomal subunit protein uS5 (191 aa).

The S5 DRBM domain occupies 21-84; it reads LVDKLVTINR…ERAKRTMIRV (64 aa). Residues 161–191 are disordered; sequence PRHVASRRGKKAAELFGKREQGQTEAEVTNG. Residues 171 to 182 are compositionally biased toward basic and acidic residues; that stretch reads KAAELFGKREQG.

It belongs to the universal ribosomal protein uS5 family. Part of the 30S ribosomal subunit. Contacts proteins S4 and S8.

In terms of biological role, with S4 and S12 plays an important role in translational accuracy. Functionally, located at the back of the 30S subunit body where it stabilizes the conformation of the head with respect to the body. This chain is Small ribosomal subunit protein uS5, found in Gluconobacter oxydans (strain 621H) (Gluconobacter suboxydans).